The following is a 370-amino-acid chain: DNA repair protein RAD51 homolog 2 (370 aa).

G109–S116 is a binding site for ATP.

The protein belongs to the RecA family. RAD51 subfamily. As to expression, preferentially expressed in flower buds and roots.

It is found in the nucleus. May be involved in the homologous recombination repair (HRR) pathway of double-stranded DNA breaks arising during DNA replication or induced by DNA-damaging agents. The protein is DNA repair protein RAD51 homolog 2 (RAD51B) of Arabidopsis thaliana (Mouse-ear cress).